A 316-amino-acid polypeptide reads, in one-letter code: MNDVTEASLPKAIFLMGPTASGKTALAIALRKVLPVELISVDSALIYRGMDIGTAKPDAAELSAAPHRLLDILDPAEAYSAADFRRDALAAMADIVAAGRIPLLVGGTMLYFKALLEGLSPLPSADPEVRARIEQQAAEQGWNALHQQLQEIDPVAAARIHPNDPQRLSRALEVFFISGKTLTELTQTSGDALPYQVHQFAIAPASRELLHQRIEQRFHQMLASGFEAEVRALFARGDLHTDMPSIRCVGYRQMWSYLNGEIPYDEMVYRGVCATRQLAKRQVTWLRGWEGVHWLDSEQPEQALNKVLQVVGASQN.

ATP is bound at residue 17 to 24 (GPTASGKT). Residue 19–24 (TASGKT) participates in substrate binding. Interaction with substrate tRNA regions lie at residues 42 to 45 (DSAL), 166 to 170 (QRLSR), and 247 to 252 (RCVGYR).

It belongs to the IPP transferase family. As to quaternary structure, monomer. Mg(2+) is required as a cofactor.

The catalysed reaction is adenosine(37) in tRNA + dimethylallyl diphosphate = N(6)-dimethylallyladenosine(37) in tRNA + diphosphate. Catalyzes the transfer of a dimethylallyl group onto the adenine at position 37 in tRNAs that read codons beginning with uridine, leading to the formation of N6-(dimethylallyl)adenosine (i(6)A). The polypeptide is tRNA dimethylallyltransferase (Klebsiella pneumoniae (strain 342)).